An 82-amino-acid polypeptide reads, in one-letter code: Small ribosomal subunit protein bS16 (82 aa).

This sequence belongs to the bacterial ribosomal protein bS16 family.

The polypeptide is Small ribosomal subunit protein bS16 (Mannheimia succiniciproducens (strain KCTC 0769BP / MBEL55E)).